The chain runs to 228 residues: 2-C-methyl-D-erythritol 4-phosphate cytidylyltransferase (228 aa).

Belongs to the IspD/TarI cytidylyltransferase family. IspD subfamily.

The enzyme catalyses 2-C-methyl-D-erythritol 4-phosphate + CTP + H(+) = 4-CDP-2-C-methyl-D-erythritol + diphosphate. It participates in isoprenoid biosynthesis; isopentenyl diphosphate biosynthesis via DXP pathway; isopentenyl diphosphate from 1-deoxy-D-xylulose 5-phosphate: step 2/6. Its function is as follows. Catalyzes the formation of 4-diphosphocytidyl-2-C-methyl-D-erythritol from CTP and 2-C-methyl-D-erythritol 4-phosphate (MEP). This is 2-C-methyl-D-erythritol 4-phosphate cytidylyltransferase from Dechloromonas aromatica (strain RCB).